Here is a 253-residue protein sequence, read N- to C-terminus: Phosphoribosylaminoimidazole-succinocarboxamide synthase (253 aa).

Belongs to the SAICAR synthetase family.

It carries out the reaction 5-amino-1-(5-phospho-D-ribosyl)imidazole-4-carboxylate + L-aspartate + ATP = (2S)-2-[5-amino-1-(5-phospho-beta-D-ribosyl)imidazole-4-carboxamido]succinate + ADP + phosphate + 2 H(+). The protein operates within purine metabolism; IMP biosynthesis via de novo pathway; 5-amino-1-(5-phospho-D-ribosyl)imidazole-4-carboxamide from 5-amino-1-(5-phospho-D-ribosyl)imidazole-4-carboxylate: step 1/2. This is Phosphoribosylaminoimidazole-succinocarboxamide synthase from Jannaschia sp. (strain CCS1).